The primary structure comprises 308 residues: Pantothenate synthetase (308 aa).

39–46 (MGALHDGH) serves as a coordination point for ATP. His46 acts as the Proton donor in catalysis. Gln71 provides a ligand contact to (R)-pantoate. Position 71 (Gln71) interacts with beta-alanine. ATP is bound at residue 157–160 (GEKD). Residue Gln163 participates in (R)-pantoate binding. Residues Val186 and 194–197 (MSSR) each bind ATP. The disordered stretch occupies residues 286 to 308 (IETPAGTAGPDGDRQYAQSPWRN).

The protein belongs to the pantothenate synthetase family. Homodimer.

It is found in the cytoplasm. The enzyme catalyses (R)-pantoate + beta-alanine + ATP = (R)-pantothenate + AMP + diphosphate + H(+). It functions in the pathway cofactor biosynthesis; (R)-pantothenate biosynthesis; (R)-pantothenate from (R)-pantoate and beta-alanine: step 1/1. In terms of biological role, catalyzes the condensation of pantoate with beta-alanine in an ATP-dependent reaction via a pantoyl-adenylate intermediate. This is Pantothenate synthetase from Mycolicibacterium paratuberculosis (strain ATCC BAA-968 / K-10) (Mycobacterium paratuberculosis).